The sequence spans 270 residues: Putative pyruvate, phosphate dikinase regulatory protein (270 aa).

151-158 (GVSRTSKT) is a binding site for ADP.

This sequence belongs to the pyruvate, phosphate/water dikinase regulatory protein family. PDRP subfamily.

The catalysed reaction is N(tele)-phospho-L-histidyl/L-threonyl-[pyruvate, phosphate dikinase] + ADP = N(tele)-phospho-L-histidyl/O-phospho-L-threonyl-[pyruvate, phosphate dikinase] + AMP + H(+). It carries out the reaction N(tele)-phospho-L-histidyl/O-phospho-L-threonyl-[pyruvate, phosphate dikinase] + phosphate + H(+) = N(tele)-phospho-L-histidyl/L-threonyl-[pyruvate, phosphate dikinase] + diphosphate. Functionally, bifunctional serine/threonine kinase and phosphorylase involved in the regulation of the pyruvate, phosphate dikinase (PPDK) by catalyzing its phosphorylation/dephosphorylation. This Lysinibacillus sphaericus (strain C3-41) protein is Putative pyruvate, phosphate dikinase regulatory protein.